A 542-amino-acid chain; its full sequence is CTP synthase (542 aa).

The amidoligase domain stretch occupies residues 1–265; the sequence is MTRYVFITGG…DREILAHFQM (265 aa). S13 is a CTP binding site. S13 contributes to the UTP binding site. ATP contacts are provided by residues 14-19 and D71; that span reads SLGKGL. Mg(2+) contacts are provided by D71 and E139. Residues 146–148, 186–191, and K222 contribute to the CTP site; these read DIE and KTKPTQ. UTP is bound by residues 186–191 and K222; that span reads KTKPTQ. 238–240 is a binding site for ATP; the sequence is RDV. The Glutamine amidotransferase type-1 domain maps to 291-541; the sequence is TIAIVGKYTG…IAAAIDQSRL (251 aa). G353 provides a ligand contact to L-glutamine. The Nucleophile; for glutamine hydrolysis role is filled by C380. L-glutamine-binding positions include 381–384, E404, and R469; that span reads FGMQ. Active-site residues include H514 and E516.

Belongs to the CTP synthase family. In terms of assembly, homotetramer.

The enzyme catalyses UTP + L-glutamine + ATP + H2O = CTP + L-glutamate + ADP + phosphate + 2 H(+). It carries out the reaction L-glutamine + H2O = L-glutamate + NH4(+). The catalysed reaction is UTP + NH4(+) + ATP = CTP + ADP + phosphate + 2 H(+). It participates in pyrimidine metabolism; CTP biosynthesis via de novo pathway; CTP from UDP: step 2/2. Its activity is regulated as follows. Allosterically activated by GTP, when glutamine is the substrate; GTP has no effect on the reaction when ammonia is the substrate. The allosteric effector GTP functions by stabilizing the protein conformation that binds the tetrahedral intermediate(s) formed during glutamine hydrolysis. Inhibited by the product CTP, via allosteric rather than competitive inhibition. Functionally, catalyzes the ATP-dependent amination of UTP to CTP with either L-glutamine or ammonia as the source of nitrogen. Regulates intracellular CTP levels through interactions with the four ribonucleotide triphosphates. The protein is CTP synthase of Methylorubrum extorquens (strain CM4 / NCIMB 13688) (Methylobacterium extorquens).